Reading from the N-terminus, the 589-residue chain is Aspartate--tRNA ligase (589 aa).

Glu-174 is an L-aspartate binding site. The aspartate stretch occupies residues 198–201 (QLFK). L-aspartate is bound at residue Arg-220. Residues 220 to 222 (RDE) and Gln-229 each bind ATP. Position 448 (His-448) interacts with L-aspartate. An ATP-binding site is contributed by Glu-483. Arg-490 lines the L-aspartate pocket. 535 to 538 (GIDR) serves as a coordination point for ATP.

It belongs to the class-II aminoacyl-tRNA synthetase family. Type 1 subfamily. In terms of assembly, homodimer.

The protein resides in the cytoplasm. It carries out the reaction tRNA(Asp) + L-aspartate + ATP = L-aspartyl-tRNA(Asp) + AMP + diphosphate. Its function is as follows. Catalyzes the attachment of L-aspartate to tRNA(Asp) in a two-step reaction: L-aspartate is first activated by ATP to form Asp-AMP and then transferred to the acceptor end of tRNA(Asp). This is Aspartate--tRNA ligase from Xylella fastidiosa (strain M12).